The following is a 190-amino-acid chain: DNA-invertase hin (190 aa).

Residues 2 to 135 form the Resolvase/invertase-type recombinase catalytic domain; the sequence is ATIGYIRVST…AGLAAARAQG (134 aa). Catalysis depends on S10, which acts as the O-(5'-phospho-DNA)-serine intermediate. The H-T-H motif DNA-binding region spans 162-181; the sequence is RQQLAIIFGIGVSTLYRYFP.

It belongs to the site-specific recombinase resolvase family.

A DNA fragment of approximately 900 base pairs, adjacent to the fljB (H2) gene, which specifies the synthesis of phase-2 flagellin, can exist in either orientation with respect to fljB. The orientation of the inversion region controls expression of fljB. The hin gene occupies about two-thirds of the inversion region; it is required for the inversion of the fljB controlling region. The polypeptide is DNA-invertase hin (hin) (Salmonella typhimurium (strain LT2 / SGSC1412 / ATCC 700720)).